Reading from the N-terminus, the 257-residue chain is Snake venom serine protease 3 (257 aa).

Residues 1–18 form the signal peptide; the sequence is MVLIRVLANLLILQLSYA. Positions 19-24 are excised as a propeptide; sequence QKSSEL. The Peptidase S1 domain occupies 25–248; the sequence is VIGGDECNIN…YTDWIQNIIA (224 aa). Intrachain disulfides connect C31-C163, C50-C66, C98-C255, C142-C209, C174-C188, and C199-C224. A glycan (N-linked (GlcNAc...) asparagine) is linked at N44. The Charge relay system role is filled by H65. An N-linked (GlcNAc...) asparagine glycan is attached at N103. D110 functions as the Charge relay system in the catalytic mechanism. N-linked (GlcNAc...) asparagine glycans are attached at residues N117 and N154. S203 functions as the Charge relay system in the catalytic mechanism. An N-linked (GlcNAc...) asparagine glycan is attached at N250.

The protein belongs to the peptidase S1 family. Snake venom subfamily. As to quaternary structure, monomer. In terms of tissue distribution, expressed by the venom gland.

The protein resides in the secreted. In terms of biological role, snake venom serine protease that may act in the hemostasis system of the prey. This Protobothrops flavoviridis (Habu) protein is Snake venom serine protease 3 (TLF3).